A 203-amino-acid chain; its full sequence is Ribonuclease HII (203 aa).

Residues 18–203 (GQYAGVDEVG…SFRPVREALA (186 aa)) form the RNase H type-2 domain. A divalent metal cation is bound by residues aspartate 24, glutamate 25, and aspartate 116.

It belongs to the RNase HII family. Mn(2+) is required as a cofactor. It depends on Mg(2+) as a cofactor.

The protein localises to the cytoplasm. The enzyme catalyses Endonucleolytic cleavage to 5'-phosphomonoester.. In terms of biological role, endonuclease that specifically degrades the RNA of RNA-DNA hybrids. This Shewanella pealeana (strain ATCC 700345 / ANG-SQ1) protein is Ribonuclease HII.